Consider the following 766-residue polypeptide: Serine/threonine-protein kinase tousled-like 1 (766 aa).

The residue at position 1 (M1) is an N-acetylmethionine. The segment covering 1–19 has biased composition (polar residues); the sequence is MSVQSSSGSLEGPPSWSQL. Residues 1-197 are disordered; sequence MSVQSSSGSL…SPSPTALAFG (197 aa). Positions 20–33 are enriched in low complexity; that stretch reads STSPTPGSAAAARS. Residue T38 is modified to Phosphothreonine. Residues 43–64 show a composition bias toward basic and acidic residues; that stretch reads RPREGAMDELHSLDPRRQELLE. S54, S77, and S80 each carry phosphoserine. Residues 68-85 show a composition bias toward low complexity; that stretch reads TGVASGSTGSTGSCSVGA. Residues 87–103 show a composition bias toward polar residues; it reads ASTNNESSNHSFGSLGS. The segment covering 105–121 has biased composition (basic and acidic residues); it reads SDKESETPEKKQSESSR. A phosphoserine mark is found at S134, S159, S174, and S176. Positions 170–192 are enriched in low complexity; it reads SPQNSHSHSTPSSSVRPNSPSPT. The stretch at 230-281 forms a coiled coil; the sequence is QDLEKKEGRIDDLLRANCDLRRQIDEQQKLLEKYKERLNKCISMSKKLLIEK. The segment at 346 to 383 is disordered; the sequence is LAKRKPPTANNSQAPSTNSEPKQRKNKAVNGAENDPFV. Residues 353–365 are compositionally biased toward polar residues; sequence TANNSQAPSTNSE. The stretch at 397–445 forms a coiled coil; sequence HEQEEIFKLRLGHLKKEEAEIQAELERLERVRNLHIRELKRINNEDNSQ. The Protein kinase domain maps to 456–734; sequence YLLLHLLGRG…VHQLANDPYL (279 aa). ATP-binding positions include 462–470 and K485; that span reads LGRGGFSEV. Catalysis depends on D586, which acts as the Proton acceptor. S743 carries the phosphoserine modification.

It belongs to the protein kinase superfamily. Ser/Thr protein kinase family. In terms of assembly, heterodimer with TLK2. It depends on Mg(2+) as a cofactor. In terms of tissue distribution, widely expressed. Present in fetal placenta, liver, kidney and pancreas but not heart or skeletal muscle. Also found in adult cell lines. Isoform 3 is ubiquitously expressed in all tissues examined.

It is found in the nucleus. The catalysed reaction is L-seryl-[protein] + ATP = O-phospho-L-seryl-[protein] + ADP + H(+). It carries out the reaction L-threonyl-[protein] + ATP = O-phospho-L-threonyl-[protein] + ADP + H(+). With respect to regulation, cell-cycle regulated, maximal activity in S-phase. Inactivated by phosphorylation at Ser-743, potentially by CHEK1. Functionally, rapidly and transiently inhibited by phosphorylation following the generation of DNA double-stranded breaks during S-phase. This is cell cycle checkpoint and ATM-pathway dependent and appears to regulate processes involved in chromatin assembly. Isoform 3 phosphorylates and enhances the stability of the t-SNARE SNAP23, augmenting its assembly with syntaxin. Isoform 3 protects the cells from the ionizing radiation by facilitating the repair of DSBs. In vitro, phosphorylates histone H3 at 'Ser-10'. This Homo sapiens (Human) protein is Serine/threonine-protein kinase tousled-like 1 (TLK1).